A 212-amino-acid polypeptide reads, in one-letter code: Peroxisomal membrane protein 4 (212 aa).

A run of 2 helical transmembrane segments spans residues 97-117 and 153-173; these read GETH…LLFG and WDPF…LFEY. N-linked (GlcNAc...) asparagine glycosylation is present at asparagine 206.

This sequence belongs to the peroxisomal membrane protein PXMP2/4 family. As to quaternary structure, interacts with PEX19.

The protein resides in the peroxisome membrane. This Mus musculus (Mouse) protein is Peroxisomal membrane protein 4 (Pxmp4).